The chain runs to 473 residues: Photosystem II CP43 reaction center protein (473 aa).

Positions 1–14 (MKTLYSLRRFYPVE) are excised as a propeptide. T15 bears the N-acetylthreonine mark. A Phosphothreonine modification is found at T15. A run of 5 helical transmembrane segments spans residues 69 to 93 (LFEV…PHLA), 134 to 155 (LLGP…KDRN), 178 to 200 (KALY…RKIT), 255 to 275 (KPFA…LSYS), and 291 to 312 (WFNN…ASQA). Residue E367 coordinates [CaMn4O5] cluster. The helical transmembrane segment at 447–471 (RARAAAAGFEKGIDRDFEPVLSMTP) threads the bilayer.

It belongs to the PsbB/PsbC family. PsbC subfamily. As to quaternary structure, PSII is composed of 1 copy each of membrane proteins PsbA, PsbB, PsbC, PsbD, PsbE, PsbF, PsbH, PsbI, PsbJ, PsbK, PsbL, PsbM, PsbT, PsbX, PsbY, PsbZ, Psb30/Ycf12, at least 3 peripheral proteins of the oxygen-evolving complex and a large number of cofactors. It forms dimeric complexes. Requires Binds multiple chlorophylls and provides some of the ligands for the Ca-4Mn-5O cluster of the oxygen-evolving complex. It may also provide a ligand for a Cl- that is required for oxygen evolution. PSII binds additional chlorophylls, carotenoids and specific lipids. as cofactor.

It is found in the plastid. It localises to the chloroplast thylakoid membrane. Functionally, one of the components of the core complex of photosystem II (PSII). It binds chlorophyll and helps catalyze the primary light-induced photochemical processes of PSII. PSII is a light-driven water:plastoquinone oxidoreductase, using light energy to abstract electrons from H(2)O, generating O(2) and a proton gradient subsequently used for ATP formation. The protein is Photosystem II CP43 reaction center protein of Populus trichocarpa (Western balsam poplar).